Consider the following 209-residue polypeptide: Thiamine-phosphate synthase (209 aa).

Residues 38–42 and asparagine 70 contribute to the 4-amino-2-methyl-5-(diphosphooxymethyl)pyrimidine site; that span reads QYRDK. Positions 71 and 89 each coordinate Mg(2+). Threonine 108 serves as a coordination point for 4-amino-2-methyl-5-(diphosphooxymethyl)pyrimidine. Residue 135–137 participates in 2-[(2R,5Z)-2-carboxy-4-methylthiazol-5(2H)-ylidene]ethyl phosphate binding; the sequence is SNT. Residue lysine 138 participates in 4-amino-2-methyl-5-(diphosphooxymethyl)pyrimidine binding. Glycine 165 provides a ligand contact to 2-[(2R,5Z)-2-carboxy-4-methylthiazol-5(2H)-ylidene]ethyl phosphate.

This sequence belongs to the thiamine-phosphate synthase family. Requires Mg(2+) as cofactor.

The enzyme catalyses 2-[(2R,5Z)-2-carboxy-4-methylthiazol-5(2H)-ylidene]ethyl phosphate + 4-amino-2-methyl-5-(diphosphooxymethyl)pyrimidine + 2 H(+) = thiamine phosphate + CO2 + diphosphate. The catalysed reaction is 2-(2-carboxy-4-methylthiazol-5-yl)ethyl phosphate + 4-amino-2-methyl-5-(diphosphooxymethyl)pyrimidine + 2 H(+) = thiamine phosphate + CO2 + diphosphate. It carries out the reaction 4-methyl-5-(2-phosphooxyethyl)-thiazole + 4-amino-2-methyl-5-(diphosphooxymethyl)pyrimidine + H(+) = thiamine phosphate + diphosphate. It functions in the pathway cofactor biosynthesis; thiamine diphosphate biosynthesis; thiamine phosphate from 4-amino-2-methyl-5-diphosphomethylpyrimidine and 4-methyl-5-(2-phosphoethyl)-thiazole: step 1/1. Condenses 4-methyl-5-(beta-hydroxyethyl)thiazole monophosphate (THZ-P) and 2-methyl-4-amino-5-hydroxymethyl pyrimidine pyrophosphate (HMP-PP) to form thiamine monophosphate (TMP). The protein is Thiamine-phosphate synthase of Ectopseudomonas mendocina (strain ymp) (Pseudomonas mendocina).